The chain runs to 93 residues: Co-chaperonin GroES (93 aa).

It belongs to the GroES chaperonin family. Heptamer of 7 subunits arranged in a ring. Interacts with the chaperonin GroEL.

Its subcellular location is the cytoplasm. Together with the chaperonin GroEL, plays an essential role in assisting protein folding. The GroEL-GroES system forms a nano-cage that allows encapsulation of the non-native substrate proteins and provides a physical environment optimized to promote and accelerate protein folding. GroES binds to the apical surface of the GroEL ring, thereby capping the opening of the GroEL channel. This chain is Co-chaperonin GroES, found in Streptococcus sanguinis.